The sequence spans 192 residues: Putative B3 domain-containing protein At4g03160 (192 aa).

Residues 22 to 44 (VFFDQEEEEEDEEEEYDEESVCE) form a disordered region. Over residues 25–44 (DQEEEEEDEEEEYDEESVCE) the composition is skewed to acidic residues. A DNA-binding region (TF-B3) is located at residues 75 to 173 (KDNQYRLMLG…EICFAIDSTR (99 aa)).

The protein localises to the nucleus. The polypeptide is Putative B3 domain-containing protein At4g03160 (Arabidopsis thaliana (Mouse-ear cress)).